The primary structure comprises 33 residues: Ferredoxin (33 aa).

A 2Fe-2S ferredoxin-type domain is found at 3–33; it reads KYKVRLLSEAEGIDVTIDSADDVYILDAAEE.

This sequence belongs to the 2Fe2S plant-type ferredoxin family. [2Fe-2S] cluster is required as a cofactor.

It localises to the plastid. Its subcellular location is the chloroplast. Its function is as follows. Ferredoxins are iron-sulfur proteins that transfer electrons in a wide variety of metabolic reactions. The sequence is that of Ferredoxin from Porphyridium aerugineum (Red microalga).